We begin with the raw amino-acid sequence, 162 residues long: MRLDQVARSLLLKEFVSGFALAMRYLFKPKATINYPFEMGHRSPRFRGEHALRRYPNGEERCIACKLCEAICPAQAITIEAGPRRNDGTRRTTRYDIDMVKCIYCGMCQEACPVDAIVEGPNFEFSVETREELLYDKQKLLANGDRWEREIARNIAADAPYR.

4Fe-4S ferredoxin-type domains are found at residues 52-82 (LRRYPNGEERCIACKLCEAICPAQAITIEAG) and 93-122 (TRYDIDMVKCIYCGMCQEACPVDAIVEGPN). Residues C62, C65, C68, C72, C102, C105, C108, and C112 each contribute to the [4Fe-4S] cluster site.

Belongs to the complex I 23 kDa subunit family. As to quaternary structure, NDH-1 is composed of 14 different subunits. Subunits NuoA, H, J, K, L, M, N constitute the membrane sector of the complex. [4Fe-4S] cluster is required as a cofactor.

The protein localises to the cell inner membrane. It carries out the reaction a quinone + NADH + 5 H(+)(in) = a quinol + NAD(+) + 4 H(+)(out). Functionally, NDH-1 shuttles electrons from NADH, via FMN and iron-sulfur (Fe-S) centers, to quinones in the respiratory chain. The immediate electron acceptor for the enzyme in this species is believed to be ubiquinone. Couples the redox reaction to proton translocation (for every two electrons transferred, four hydrogen ions are translocated across the cytoplasmic membrane), and thus conserves the redox energy in a proton gradient. In Methylobacterium nodulans (strain LMG 21967 / CNCM I-2342 / ORS 2060), this protein is NADH-quinone oxidoreductase subunit I.